Reading from the N-terminus, the 125-residue chain is Small ribosomal subunit protein eS8 (125 aa).

This sequence belongs to the eukaryotic ribosomal protein eS8 family. Part of the 30S ribosomal subunit.

The chain is Small ribosomal subunit protein eS8 from Methanosphaerula palustris (strain ATCC BAA-1556 / DSM 19958 / E1-9c).